Reading from the N-terminus, the 217-residue chain is tRNA (guanine-N(7)-)-methyltransferase (217 aa).

Glu44, Asp69, Asp96, and Asp118 together coordinate S-adenosyl-L-methionine. Asp118 is a catalytic residue. Lys122 is a substrate binding site. The tract at residues 124–129 (RHEKRR) is interaction with RNA. Residues Asp154 and 193-196 (TEYE) contribute to the substrate site.

This sequence belongs to the class I-like SAM-binding methyltransferase superfamily. TrmB family.

The catalysed reaction is guanosine(46) in tRNA + S-adenosyl-L-methionine = N(7)-methylguanosine(46) in tRNA + S-adenosyl-L-homocysteine. It functions in the pathway tRNA modification; N(7)-methylguanine-tRNA biosynthesis. Catalyzes the formation of N(7)-methylguanine at position 46 (m7G46) in tRNA. The protein is tRNA (guanine-N(7)-)-methyltransferase of Lactococcus lactis subsp. cremoris (strain SK11).